Here is a 258-residue protein sequence, read N- to C-terminus: Tryptophan synthase alpha chain (258 aa).

Residues Glu52 and Asp63 each act as proton acceptor in the active site.

The protein belongs to the TrpA family. Tetramer of two alpha and two beta chains.

It carries out the reaction (1S,2R)-1-C-(indol-3-yl)glycerol 3-phosphate + L-serine = D-glyceraldehyde 3-phosphate + L-tryptophan + H2O. It participates in amino-acid biosynthesis; L-tryptophan biosynthesis; L-tryptophan from chorismate: step 5/5. Its function is as follows. The alpha subunit is responsible for the aldol cleavage of indoleglycerol phosphate to indole and glyceraldehyde 3-phosphate. This chain is Tryptophan synthase alpha chain, found in Streptococcus pneumoniae (strain JJA).